Here is a 1010-residue protein sequence, read N- to C-terminus: Probable LRR receptor-like serine/threonine-protein kinase At3g47570 (1010 aa).

An N-terminal signal peptide occupies residues 1 to 19 (MRLFLLLAFNALMLLETHG). The Extracellular segment spans residues 20-645 (FTDETDRQAL…SSRLKKVVIG (626 aa)). N-linked (GlcNAc...) asparagine glycans are attached at residues N48 and N88. 10 LRR repeats span residues 89 to 113 (LSFL…VGQL), 114 to 137 (SRLE…LYNC), 139 to 161 (RLLN…LGSL), 162 to 185 (TNLV…LGNL), 186 to 209 (TLLE…VAQL), 211 to 233 (QIWS…LYNL), 234 to 258 (SSLK…GILL), 259 to 282 (PNLL…LSNI), 283 to 307 (STLE…NVPN), and 310 to 333 (LLFL…TSLT). N-linked (GlcNAc...) asparagine glycosylation is present at N136. Residue N184 is glycosylated (N-linked (GlcNAc...) asparagine). N-linked (GlcNAc...) asparagine glycans are attached at residues N221 and N232. N281 and N294 each carry an N-linked (GlcNAc...) asparagine glycan. Residues N334 and N358 are each glycosylated (N-linked (GlcNAc...) asparagine). LRR repeat units follow at residues 335 to 359 (CTQL…IANL), 361 to 384 (AKLV…IGNL), 385 to 408 (INLQ…LGKL), 410 to 432 (NLRY…IGNM), 433 to 455 (TMLE…SLGN), 457 to 480 (SHLL…IMKI), 481 to 504 (QQLL…IGAL), 505 to 528 (QNLG…LGNC), 530 to 551 (TMES…LKGL), 552 to 574 (VGVK…YFAS), and 575 to 600 (FSKL…IFEN). N-linked (GlcNAc...) asparagine glycans are attached at residues N431, N455, and N470. N-linked (GlcNAc...) asparagine glycans are attached at residues N582 and N600. The helical transmembrane segment at 646–666 (VSVGITLLLLLFMASVTLIWL) threads the bilayer. Over 667-1010 (RKRKKNKETN…FFKASRTTWR (344 aa)) the chain is Cytoplasmic. A Phosphothreonine modification is found at T699. A Protein kinase domain is found at 702 to 1002 (FSSSNMVGSG…ELISIRERFF (301 aa)). ATP contacts are provided by residues 708 to 716 (VGSGSFGTV) and K731. Y781 and Y826 each carry phosphotyrosine. Residue D839 is the Proton acceptor of the active site. Y887 carries the phosphotyrosine modification.

This sequence belongs to the protein kinase superfamily. Ser/Thr protein kinase family.

The protein resides in the cell membrane. It carries out the reaction L-seryl-[protein] + ATP = O-phospho-L-seryl-[protein] + ADP + H(+). The enzyme catalyses L-threonyl-[protein] + ATP = O-phospho-L-threonyl-[protein] + ADP + H(+). The chain is Probable LRR receptor-like serine/threonine-protein kinase At3g47570 from Arabidopsis thaliana (Mouse-ear cress).